A 284-amino-acid polypeptide reads, in one-letter code: MTELIDGKALAQKMQQELAAKVNNLKQKKGIVPGLAVILVGDDPASQVYVRNKERAALTVGFKSETVRLSEFICQEELIAVIERYNADNTIHGILVQLPLPNHINDKKIILAIDPKKDVDGFHPMNTGHLWSGRPLMVPCTPSGIMELLREYNVNLEGKHAVIIGRSNIVGKPMAQLLLDKNATVTLTHSRTRQLEEVCRCADVLIVAIGQGHFITKQYIKDGAIVIDVGMNRDDNGKLIGDVAFDEVAEVAAKITPVPGGVGPMTIAMLLEQTYQSALRSTHK.

Residues 165–167 (GRS) and S190 contribute to the NADP(+) site.

Belongs to the tetrahydrofolate dehydrogenase/cyclohydrolase family. In terms of assembly, homodimer.

The catalysed reaction is (6R)-5,10-methylene-5,6,7,8-tetrahydrofolate + NADP(+) = (6R)-5,10-methenyltetrahydrofolate + NADPH. It carries out the reaction (6R)-5,10-methenyltetrahydrofolate + H2O = (6R)-10-formyltetrahydrofolate + H(+). It participates in one-carbon metabolism; tetrahydrofolate interconversion. Catalyzes the oxidation of 5,10-methylenetetrahydrofolate to 5,10-methenyltetrahydrofolate and then the hydrolysis of 5,10-methenyltetrahydrofolate to 10-formyltetrahydrofolate. This is Bifunctional protein FolD from Streptococcus pyogenes serotype M28 (strain MGAS6180).